A 570-amino-acid chain; its full sequence is Sulfite reductase [NADPH] hemoprotein beta-component (570 aa).

Residues C434, C440, C479, and C483 each contribute to the [4Fe-4S] cluster site. Position 483 (C483) interacts with siroheme.

It belongs to the nitrite and sulfite reductase 4Fe-4S domain family. In terms of assembly, alpha(8)-beta(8). The alpha component is a flavoprotein, the beta component is a hemoprotein. Siroheme is required as a cofactor. The cofactor is [4Fe-4S] cluster.

It carries out the reaction hydrogen sulfide + 3 NADP(+) + 3 H2O = sulfite + 3 NADPH + 4 H(+). The protein operates within sulfur metabolism; hydrogen sulfide biosynthesis; hydrogen sulfide from sulfite (NADPH route): step 1/1. Component of the sulfite reductase complex that catalyzes the 6-electron reduction of sulfite to sulfide. This is one of several activities required for the biosynthesis of L-cysteine from sulfate. In Klebsiella pneumoniae subsp. pneumoniae (strain ATCC 700721 / MGH 78578), this protein is Sulfite reductase [NADPH] hemoprotein beta-component.